A 67-amino-acid chain; its full sequence is uncharacterized protein (67 aa).

The chain crosses the membrane as a helical span at residues Cys-26–Phe-46.

It belongs to the plectrovirus ORF11 family.

Its subcellular location is the host membrane. This is an uncharacterized protein from Spiroplasma virus SpV1-C74 (SpV1).